Reading from the N-terminus, the 223-residue chain is Cytidylate kinase (223 aa).

12–20 (GPSGVGKGT) is an ATP binding site.

The protein belongs to the cytidylate kinase family. Type 1 subfamily.

It is found in the cytoplasm. The catalysed reaction is CMP + ATP = CDP + ADP. The enzyme catalyses dCMP + ATP = dCDP + ADP. The protein is Cytidylate kinase of Xylella fastidiosa (strain M23).